Here is a 102-residue protein sequence, read N- to C-terminus: Large ribosomal subunit protein uL24 (102 aa).

It belongs to the universal ribosomal protein uL24 family. In terms of assembly, part of the 50S ribosomal subunit.

Its function is as follows. One of two assembly initiator proteins, it binds directly to the 5'-end of the 23S rRNA, where it nucleates assembly of the 50S subunit. One of the proteins that surrounds the polypeptide exit tunnel on the outside of the subunit. This Paraburkholderia xenovorans (strain LB400) protein is Large ribosomal subunit protein uL24.